A 262-amino-acid polypeptide reads, in one-letter code: Short-chain reductase protein NovJ (262 aa).

Residues 23 to 26 and 73 to 74 each bind NADP(+); these read GAGR and DV. Position 152 (serine 152) interacts with substrate. Tyrosine 164 (proton acceptor) is an active-site residue. An NADP(+)-binding site is contributed by 164–168; sequence YATAK.

The protein belongs to the short-chain dehydrogenases/reductases (SDR) family. As to quaternary structure, heterotetramer; the NovJ(2)K(2) heterotetramer is composed of subunits of 2 NovJ and 2 subunits of NovK.

It participates in antibiotic biosynthesis; novobiocin biosynthesis. Functionally, catalytic subunit of the NovJ(2)K(2) heterotetramer that catalyzes the NADPH-dependent reduction of the tyrosyl moiety of L-beta-OH-Tyr-S-NovH intermediate to yield the tethered beta-ketotyrosyl-S-NovH in the novobiocin biosynthesis pathway. Novobiocin is an aminocoumarin family antibiotic that targets bacterial DNA gyrases. The polypeptide is Short-chain reductase protein NovJ (novJ) (Streptomyces niveus (Streptomyces spheroides)).